We begin with the raw amino-acid sequence, 397 residues long: tRNA(Ile)-lysidine synthase (397 aa).

44–49 (SGGADS) provides a ligand contact to ATP.

Belongs to the tRNA(Ile)-lysidine synthase family.

The protein resides in the cytoplasm. The enzyme catalyses cytidine(34) in tRNA(Ile2) + L-lysine + ATP = lysidine(34) in tRNA(Ile2) + AMP + diphosphate + H(+). Ligates lysine onto the cytidine present at position 34 of the AUA codon-specific tRNA(Ile) that contains the anticodon CAU, in an ATP-dependent manner. Cytidine is converted to lysidine, thus changing the amino acid specificity of the tRNA from methionine to isoleucine. This Rhodopirellula baltica (strain DSM 10527 / NCIMB 13988 / SH1) protein is tRNA(Ile)-lysidine synthase.